The chain runs to 101 residues: Small ribosomal subunit protein uS10 (101 aa).

It belongs to the universal ribosomal protein uS10 family. Part of the 30S ribosomal subunit.

In terms of biological role, involved in the binding of tRNA to the ribosomes. The chain is Small ribosomal subunit protein uS10 from Mycobacterium leprae (strain Br4923).